The chain runs to 235 residues: Thiamine import ATP-binding protein ThiQ (235 aa).

The region spanning 2–230 is the ABC transporter domain; sequence LKLIDITWLY…QASASALLGI (229 aa). 32 to 39 provides a ligand contact to ATP; the sequence is GPSGAGKS.

It belongs to the ABC transporter superfamily. Thiamine importer (TC 3.A.1.19.1) family. In terms of assembly, the complex is composed of two ATP-binding proteins (ThiQ), two transmembrane proteins (ThiP) and a solute-binding protein (ThiB).

The protein resides in the cell inner membrane. The catalysed reaction is thiamine(out) + ATP + H2O = thiamine(in) + ADP + phosphate + H(+). In terms of biological role, part of the ABC transporter complex ThiBPQ involved in thiamine import. Responsible for energy coupling to the transport system. This Salmonella paratyphi A (strain ATCC 9150 / SARB42) protein is Thiamine import ATP-binding protein ThiQ.